The chain runs to 744 residues: Deleted in azoospermia protein 1 (744 aa).

Over residues 1–10 (MSAANPETPN) the composition is skewed to polar residues. Residues 1–27 (MSAANPETPNSTISREASTQSSSAAAS) are disordered. The segment covering 11 to 27 (STISREASTQSSSAAAS) has biased composition (low complexity). An RRM 1 domain is found at 40 to 115 (NTVFVGGIDA…KKLKLGPAIR (76 aa)). Polar residues predominate over residues 163-175 (QHVQSAANPETPN). Positions 163–192 (QHVQSAANPETPNSTISREASTQSSSAAAS) are disordered. A compositionally biased stretch (low complexity) spans 176-192 (STISREASTQSSSAAAS). The region spanning 205-280 (NTVFVGGIDA…KKLKLGPAIR (76 aa)) is the RRM 2 domain. Over residues 328–340 (QHVQSAANPETPN) the composition is skewed to polar residues. Positions 328-357 (QHVQSAANPETPNSTISREASTQSSSAAAS) are disordered. Positions 341–357 (STISREASTQSSSAAAS) are enriched in low complexity. One can recognise an RRM 3 domain in the interval 370–445 (NTVFVGGIDA…KKLKLGPAIR (76 aa)). DAZ domains follow at residues 497–520 (AYSAYPHSPGQVITGCQLLVYNYQ), 521–544 (EYPTYPDSAFQVTTGYQLPVYNYQ), 545–568 (PFPAYPRSPFQVTAGYQLPVYNYQ), 569–592 (AFPAYPNSPFQVATGYQFPVYNYQ), 593–616 (PFPAYPSSPFQVTAGYQLPVYNYQ), 617–640 (AFPAYPNSPFQVATGYQFPVYNYQ), 641–664 (AFPAYPNSPVQVTTGYQLPVYNYQ), 665–688 (AFPAYPSSPFQVTTGYQLPVYNYQ), and 689–712 (AFPAYPNSAVQVTTGYQFHVYNYQ).

Belongs to the RRM DAZ family. Forms a heterodimer with BOLL and DAZL. Interacts with PUM2, DAZAP1, DAZAP2, DZIP1 and DZIP3. As to expression, testis-specific. Expression restricted to premeiotic germ cells, particularly in spermatogonia (at protein level).

The protein localises to the cytoplasm. It localises to the nucleus. Its function is as follows. RNA-binding protein that plays an essential role in spermatogenesis. May act by binding to the 3'-UTR of mRNAs and regulating their translation. Promotes germ-cell progression to meiosis and formation of haploid germ cells. The protein is Deleted in azoospermia protein 1 (DAZ1) of Homo sapiens (Human).